Here is a 415-residue protein sequence, read N- to C-terminus: Phosphoribosylamine--glycine ligase (415 aa).

One can recognise an ATP-grasp domain in the interval 108-311; sequence KKIMKKYNIP…LMQHIIDLDE (204 aa). 134 to 191 contacts ATP; that stretch reads IENCELPVVVKKDGLAAGKGVIIADTIEAARSAIEIMYGDEEEGTVVFETFLEGEEFS. Residues Glu-281 and Asn-283 each contribute to the Mg(2+) site.

Belongs to the GARS family. Requires Mg(2+) as cofactor. Mn(2+) is required as a cofactor.

The catalysed reaction is 5-phospho-beta-D-ribosylamine + glycine + ATP = N(1)-(5-phospho-beta-D-ribosyl)glycinamide + ADP + phosphate + H(+). It participates in purine metabolism; IMP biosynthesis via de novo pathway; N(1)-(5-phospho-D-ribosyl)glycinamide from 5-phospho-alpha-D-ribose 1-diphosphate: step 2/2. This is Phosphoribosylamine--glycine ligase from Staphylococcus aureus (strain Mu50 / ATCC 700699).